Here is a 152-residue protein sequence, read N- to C-terminus: MFP1 attachment factor 1 (152 aa).

Disordered stretches follow at residues 1-33 (MAEIDSAQSQETVTQETQNKPMTTSFSIWPPTQ) and 107-152 (DTVK…ETEP). Residues 12–115 (TVTQETQNKP…IDTVKSRSAP (104 aa)) form a WPP region. Residues 134-152 (EPSSASGLTGEVSSVETEP) are compositionally biased toward polar residues.

Interacts with WAP through its WPP domain. Binds to MFP1 and FPP proteins. As to expression, expressed in young tomato leaves, young fruits, and flowers (at protein level).

It is found in the nucleus envelope. The protein localises to the cytoplasm. The protein resides in the golgi apparatus. It localises to the nucleus. Its subcellular location is the nucleus matrix. This is MFP1 attachment factor 1 (MAF1) from Solanum lycopersicum (Tomato).